The primary structure comprises 351 residues: Protein RecA (351 aa).

67–74 contributes to the ATP binding site; that stretch reads GPESSGKT.

The protein belongs to the RecA family.

It localises to the cytoplasm. In terms of biological role, can catalyze the hydrolysis of ATP in the presence of single-stranded DNA, the ATP-dependent uptake of single-stranded DNA by duplex DNA, and the ATP-dependent hybridization of homologous single-stranded DNAs. It interacts with LexA causing its activation and leading to its autocatalytic cleavage. The polypeptide is Protein RecA (Mannheimia succiniciproducens (strain KCTC 0769BP / MBEL55E)).